A 420-amino-acid chain; its full sequence is MDGTDVTMLMREIGVRARAAAAELAFAEPSRKEEALNAAAEAMLARSDEILEANGRDLAFGAEKGLTPAMMDRLKLDAARIDGIVEGLRAVAGQPDPVGQVIAEWDRPSGLHIRRVRTPLGVVGVIYESRPNVTADAGALCLKSGNAVILRGGSESFHSSGAIHAALQDGLRQAGLPVDAIQRVPTRDRAAVAEMLRMVEHIDVIVPRGGKGLVGLVQAEARVPVFAHLEGICHVYADGEADLEKARRVVLNAKTRRTGICGSAECLLIDRAFLAKHGPVLIEDLLKAGVEVRAEGELAQVPGTVPAQPEDFGREFLDMIIAAKVVDGVDEAIAHIRRYGSSHTESILTENDATAERFFRRLDSAILMRNASTQFADGGEFGMGAEIGIATGKMHARGPVGAEQLTSFKYLVTGDGTIRT.

The protein belongs to the gamma-glutamyl phosphate reductase family.

It localises to the cytoplasm. The enzyme catalyses L-glutamate 5-semialdehyde + phosphate + NADP(+) = L-glutamyl 5-phosphate + NADPH + H(+). It functions in the pathway amino-acid biosynthesis; L-proline biosynthesis; L-glutamate 5-semialdehyde from L-glutamate: step 2/2. Its function is as follows. Catalyzes the NADPH-dependent reduction of L-glutamate 5-phosphate into L-glutamate 5-semialdehyde and phosphate. The product spontaneously undergoes cyclization to form 1-pyrroline-5-carboxylate. The polypeptide is Gamma-glutamyl phosphate reductase (Cereibacter sphaeroides (strain ATCC 17023 / DSM 158 / JCM 6121 / CCUG 31486 / LMG 2827 / NBRC 12203 / NCIMB 8253 / ATH 2.4.1.) (Rhodobacter sphaeroides)).